The sequence spans 150 residues: Deoxyuridine 5'-triphosphate nucleotidohydrolase (150 aa).

Residues 68-70, Asn-81, 85-87, and Lys-95 contribute to the substrate site; these read RSG and TID.

Belongs to the dUTPase family. The cofactor is Mg(2+).

The catalysed reaction is dUTP + H2O = dUMP + diphosphate + H(+). The protein operates within pyrimidine metabolism; dUMP biosynthesis; dUMP from dCTP (dUTP route): step 2/2. This enzyme is involved in nucleotide metabolism: it produces dUMP, the immediate precursor of thymidine nucleotides and it decreases the intracellular concentration of dUTP so that uracil cannot be incorporated into DNA. This is Deoxyuridine 5'-triphosphate nucleotidohydrolase from Rickettsia bellii (strain OSU 85-389).